Reading from the N-terminus, the 571-residue chain is Kelch-like protein 28 (571 aa).

Residues 35–102 enclose the BTB domain; that stretch reads CDIILRVGDV…AYTGTVFISQ (68 aa). 6 Kelch repeats span residues 284–331, 332–386, 387–433, 435–479, 480–526, and 528–570; these read VLCA…VLDQ, KVYV…VLAG, ELYA…VLDG, IYAI…VMLG, FIFV…VIDN, and LYVV…GLTA.

The sequence is that of Kelch-like protein 28 (KLHL28) from Homo sapiens (Human).